Here is a 292-residue protein sequence, read N- to C-terminus: NAD kinase (292 aa).

The Proton acceptor role is filled by Asp-73. Residues 73–74 (DG), 147–148 (NE), His-158, Arg-175, Asp-177, 188–193 (TGYSLS), and Gln-248 contribute to the NAD(+) site.

This sequence belongs to the NAD kinase family. A divalent metal cation is required as a cofactor.

It is found in the cytoplasm. It catalyses the reaction NAD(+) + ATP = ADP + NADP(+) + H(+). Its function is as follows. Involved in the regulation of the intracellular balance of NAD and NADP, and is a key enzyme in the biosynthesis of NADP. Catalyzes specifically the phosphorylation on 2'-hydroxyl of the adenosine moiety of NAD to yield NADP. The sequence is that of NAD kinase from Buchnera aphidicola subsp. Baizongia pistaciae (strain Bp).